A 340-amino-acid polypeptide reads, in one-letter code: Deubiquitinase SseL (340 aa).

Residue H223 is part of the active site. Catalysis depends on C285, which acts as the Nucleophile.

It belongs to the peptidase C79 family.

It localises to the secreted. The protein resides in the host cytoplasm. Effector proteins function to alter host cell physiology and promote bacterial survival in host tissues. This protease targets the host cell ubiquitin pathway by acting as a deubiquitinase in infected host cells. This is Deubiquitinase SseL (sseL) from Salmonella paratyphi A (strain ATCC 9150 / SARB42).